Reading from the N-terminus, the 102-residue chain is Large ribosomal subunit protein uL24 (102 aa).

The tract at residues 44–65 is disordered; the sequence is HAKPSQDNPQGGILNQEAPIHS.

The protein belongs to the universal ribosomal protein uL24 family. In terms of assembly, part of the 50S ribosomal subunit.

In terms of biological role, one of two assembly initiator proteins, it binds directly to the 5'-end of the 23S rRNA, where it nucleates assembly of the 50S subunit. Its function is as follows. One of the proteins that surrounds the polypeptide exit tunnel on the outside of the subunit. This Shouchella clausii (strain KSM-K16) (Alkalihalobacillus clausii) protein is Large ribosomal subunit protein uL24.